The sequence spans 132 residues: Riboflavin kinase (132 aa).

Position 13–18 (13–18) interacts with CDP; sequence GLGHGS. Mg(2+)-binding residues include T40 and N42. 2 residues coordinate FMN: T98 and E106. CDP is bound at residue 111–114; the sequence is VYLR.

The protein belongs to the archaeal riboflavin kinase family. Requires Mg(2+) as cofactor.

The catalysed reaction is riboflavin + CTP = CDP + FMN + H(+). It participates in cofactor biosynthesis; FMN biosynthesis; FMN from riboflavin (CTP route): step 1/1. Its function is as follows. Catalyzes the CTP-dependent phosphorylation of riboflavin (vitamin B2) to form flavin mononucleotide (FMN). This is Riboflavin kinase from Aeropyrum pernix (strain ATCC 700893 / DSM 11879 / JCM 9820 / NBRC 100138 / K1).